The sequence spans 395 residues: RNA pseudouridine synthase 7 (395 aa).

Positions 1-21 (MKRKQQEDDNDDGVEKAVSPV) are disordered. Residues 74 to 136 (KTIVDLFADE…HEPPVMIDDV (63 aa)) form the S4 RNA-binding domain. Residue aspartate 187 is part of the active site. The span at 244-255 (EGRSTAEDANSS) shows a compositional bias: polar residues. Residues 244–263 (EGRSTAEDANSSGDDKKVKG) are disordered.

The protein belongs to the pseudouridine synthase RluA family.

The enzyme catalyses a uridine in RNA = a pseudouridine in RNA. The sequence is that of RNA pseudouridine synthase 7 from Arabidopsis thaliana (Mouse-ear cress).